Here is a 145-residue protein sequence, read N- to C-terminus: D-aminoacyl-tRNA deacylase (145 aa).

A Gly-cisPro motif, important for rejection of L-amino acids motif is present at residues 137-138 (GP).

It belongs to the DTD family. Homodimer.

Its subcellular location is the cytoplasm. It catalyses the reaction glycyl-tRNA(Ala) + H2O = tRNA(Ala) + glycine + H(+). It carries out the reaction a D-aminoacyl-tRNA + H2O = a tRNA + a D-alpha-amino acid + H(+). An aminoacyl-tRNA editing enzyme that deacylates mischarged D-aminoacyl-tRNAs. Also deacylates mischarged glycyl-tRNA(Ala), protecting cells against glycine mischarging by AlaRS. Acts via tRNA-based rather than protein-based catalysis; rejects L-amino acids rather than detecting D-amino acids in the active site. By recycling D-aminoacyl-tRNA to D-amino acids and free tRNA molecules, this enzyme counteracts the toxicity associated with the formation of D-aminoacyl-tRNA entities in vivo and helps enforce protein L-homochirality. This is D-aminoacyl-tRNA deacylase from Lactobacillus delbrueckii subsp. bulgaricus (strain ATCC 11842 / DSM 20081 / BCRC 10696 / JCM 1002 / NBRC 13953 / NCIMB 11778 / NCTC 12712 / WDCM 00102 / Lb 14).